The primary structure comprises 201 residues: Akirin-2 (201 aa).

2 positions are modified to phosphoserine: serine 18 and serine 21. Residues 23-28 (KRRRCA) carry the Nuclear localization signal motif. Phosphoserine is present on serine 55. Positions 198 to 201 (SYVS) match the SYVS motif motif.

The protein belongs to the akirin family. As to quaternary structure, homodimer. Interacts with IPO9; the interaction is direct. Associates with 20S and 26S proteasomes. Interacts with SMARCD1; promoting SWI/SNF complex recruitment. Interacts with NFKBIZ. Interacts with YWHAB. Post-translationally, polyubiquitinated. Polyubiquitination is dependent of UBR5 that extends pre-ubiquitinated AKIRIN2.

The protein localises to the nucleus. It is found in the cytoplasm. The protein resides in the membrane. Molecular adapter that acts as a bridge between a variety of multiprotein complexes, and which is involved in embryonic development, immunity, myogenesis and brain development. Plays a key role in nuclear protein degradation by promoting import of proteasomes into the nucleus: directly binds to fully assembled 20S proteasomes at one end and to nuclear import receptor IPO9 at the other end, bridging them together and mediating the import of pre-assembled proteasome complexes through the nuclear pore. Involved in innate immunity by regulating the production of interleukin-6 (IL6) downstream of Toll-like receptor (TLR): acts by bridging the NF-kappa-B inhibitor NFKBIZ and the SWI/SNF complex, leading to promote induction of IL6. Also involved in adaptive immunity by promoting B-cell activation. Involved in brain development: required for the survival and proliferation of cerebral cortical progenitor cells. Involved in myogenesis: required for skeletal muscle formation and skeletal development, possibly by regulating expression of muscle differentiation factors. Also plays a role in facilitating interdigital tissue regression during limb development. The chain is Akirin-2 from Mus musculus (Mouse).